The following is a 133-amino-acid chain: Beta-synuclein (133 aa).

Repeat copies occupy residues 20–30 and 31–41. The interval 20–66 is 4 X 11 AA tandem repeats of [EGS]-K-T-K-[EQ]-[GQ]-V-X(4); the sequence is EKTKQGVTEAAEKTKEGVLYVGSKTSGVVQGVASVAEKTKEQASHLG. A 3; approximate repeat occupies 42–55; the sequence is SKTSGVVQGVASVA. Ser45 is subject to Phosphoserine. Residues 56-66 form repeat 4; sequence EKTKEQASHLG. Residues 96–133 form a disordered region; the sequence is EVAQEAAEEPLIEPLMEPEGESYEDSPQEEYQEYEPEA. The segment covering 97 to 133 has biased composition (acidic residues); sequence VAQEAAEEPLIEPLMEPEGESYEDSPQEEYQEYEPEA. Ser117 is modified (phosphoserine; by BARK1, CK2 and GRK5).

The protein belongs to the synuclein family. Post-translationally, phosphorylated. Phosphorylation by G-protein coupled receptor kinases (GRK) is more efficient than phosphorylation by CK1, CK2 and CaM-kinase II. As to expression, highly expressed in the brain.

The protein localises to the cytoplasm. Functionally, may be involved in neuronal plasticity. The protein is Beta-synuclein (Sncb) of Mus musculus (Mouse).